The sequence spans 393 residues: Probable acetyl-CoA acyltransferase (393 aa).

The Acyl-thioester intermediate role is filled by Cys88. Catalysis depends on proton acceptor residues His349 and Cys378.

Belongs to the thiolase-like superfamily. Thiolase family.

It localises to the cytoplasm. The catalysed reaction is 2 acetyl-CoA = acetoacetyl-CoA + CoA. This chain is Probable acetyl-CoA acyltransferase, found in Staphylococcus aureus (strain COL).